Reading from the N-terminus, the 239-residue chain is 4-hydroxy-tetrahydrodipicolinate reductase (239 aa).

NAD(+) is bound by residues 12-17, 94-96, and 118-121; these read GASGRM, GTT, and ASNF. H150 functions as the Proton donor/acceptor in the catalytic mechanism. Residue H151 coordinates (S)-2,3,4,5-tetrahydrodipicolinate. K154 functions as the Proton donor in the catalytic mechanism. 160 to 161 is a binding site for (S)-2,3,4,5-tetrahydrodipicolinate; that stretch reads GT.

It belongs to the DapB family.

The protein localises to the cytoplasm. It catalyses the reaction (S)-2,3,4,5-tetrahydrodipicolinate + NAD(+) + H2O = (2S,4S)-4-hydroxy-2,3,4,5-tetrahydrodipicolinate + NADH + H(+). It carries out the reaction (S)-2,3,4,5-tetrahydrodipicolinate + NADP(+) + H2O = (2S,4S)-4-hydroxy-2,3,4,5-tetrahydrodipicolinate + NADPH + H(+). It functions in the pathway amino-acid biosynthesis; L-lysine biosynthesis via DAP pathway; (S)-tetrahydrodipicolinate from L-aspartate: step 4/4. Functionally, catalyzes the conversion of 4-hydroxy-tetrahydrodipicolinate (HTPA) to tetrahydrodipicolinate. This Stenotrophomonas maltophilia (strain R551-3) protein is 4-hydroxy-tetrahydrodipicolinate reductase.